We begin with the raw amino-acid sequence, 462 residues long: Myo-inositol transporter 3B (462 aa).

10 helical membrane passes run 1-21 (MAILISDVFFTIGAVLIASSY), 31-51 (IILGIGVGGAAVIAPLFITET), 61-81 (IGVNAFFIPFGQVVADAIGAG), 91-111 (LLFALGVVPSVLQLLLFHYLP), 194-214 (LCGFNTLLYYAGTLFGLLGLS), 218-238 (LGGLIPAGTNAVFVLIGMSLV), 245-265 (GLMLFGVPIMLLGLVWNIIGF), 289-309 (VVIGGIVFFVVGYGLTYSHLV), 324-344 (GSGVATTVCWIANLVVSVSYL), and 354-374 (GTYGFYLGLSVIGFAFVVFCF).

It belongs to the major facilitator superfamily. Sugar transporter (TC 2.A.1.1) family.

It is found in the cell membrane. The enzyme catalyses myo-inositol(out) + H(+)(out) = myo-inositol(in) + H(+)(in). Transporter for myo-inositol. In Cryptococcus neoformans var. grubii serotype A (strain H99 / ATCC 208821 / CBS 10515 / FGSC 9487) (Filobasidiella neoformans var. grubii), this protein is Myo-inositol transporter 3B.